Reading from the N-terminus, the 144-residue chain is Large ribosomal subunit protein uL16 (144 aa).

It belongs to the universal ribosomal protein uL16 family. In terms of assembly, part of the 50S ribosomal subunit.

In terms of biological role, binds 23S rRNA and is also seen to make contacts with the A and possibly P site tRNAs. The protein is Large ribosomal subunit protein uL16 of Bacillus cytotoxicus (strain DSM 22905 / CIP 110041 / 391-98 / NVH 391-98).